A 284-amino-acid polypeptide reads, in one-letter code: Pantothenate synthetase (284 aa).

Met30–His37 contacts ATP. Residue His37 is the Proton donor of the active site. Gln61 provides a ligand contact to (R)-pantoate. Residue Gln61 participates in beta-alanine binding. Position 149-152 (Gly149–Asp152) interacts with ATP. Residue Gln155 participates in (R)-pantoate binding. Residues Val178 and Leu186 to Arg189 contribute to the ATP site.

The protein belongs to the pantothenate synthetase family. Homodimer.

The protein resides in the cytoplasm. It carries out the reaction (R)-pantoate + beta-alanine + ATP = (R)-pantothenate + AMP + diphosphate + H(+). The protein operates within cofactor biosynthesis; (R)-pantothenate biosynthesis; (R)-pantothenate from (R)-pantoate and beta-alanine: step 1/1. In terms of biological role, catalyzes the condensation of pantoate with beta-alanine in an ATP-dependent reaction via a pantoyl-adenylate intermediate. The sequence is that of Pantothenate synthetase from Yersinia enterocolitica serotype O:8 / biotype 1B (strain NCTC 13174 / 8081).